The chain runs to 393 residues: 2,3,4,5-tetrahydropyridine-2,6-dicarboxylate N-succinyltransferase (393 aa).

The active-site Acyl-anhydride intermediate is the glutamate 261. Succinyl-CoA is bound by residues arginine 263, glycine 278, serine 281, alanine 304, 319 to 320, glycine 327, lysine 356, and 369 to 372; these read DA and RQDS.

It belongs to the type 2 tetrahydrodipicolinate N-succinyltransferase family. As to quaternary structure, homotrimer.

The protein resides in the cytoplasm. The catalysed reaction is (S)-2,3,4,5-tetrahydrodipicolinate + succinyl-CoA + H2O = (S)-2-succinylamino-6-oxoheptanedioate + CoA. It participates in amino-acid biosynthesis; L-lysine biosynthesis via DAP pathway; LL-2,6-diaminopimelate from (S)-tetrahydrodipicolinate (succinylase route): step 1/3. Functionally, catalyzes the conversion of the cyclic tetrahydrodipicolinate (THDP) into the acyclic N-succinyl-L-2-amino-6-oxopimelate using succinyl-CoA. The protein is 2,3,4,5-tetrahydropyridine-2,6-dicarboxylate N-succinyltransferase of Nitratiruptor sp. (strain SB155-2).